The sequence spans 428 residues: Trigger factor (428 aa).

Residues 163–248 (GDTAVIDFEG…VHEVKAKQLP (86 aa)) enclose the PPIase FKBP-type domain.

The protein belongs to the FKBP-type PPIase family. Tig subfamily.

The protein resides in the cytoplasm. It carries out the reaction [protein]-peptidylproline (omega=180) = [protein]-peptidylproline (omega=0). Its function is as follows. Involved in protein export. Acts as a chaperone by maintaining the newly synthesized protein in an open conformation. Functions as a peptidyl-prolyl cis-trans isomerase. The sequence is that of Trigger factor from Geobacillus thermodenitrificans (strain NG80-2).